We begin with the raw amino-acid sequence, 117 residues long: Large ribosomal subunit protein bL17 (117 aa).

The protein belongs to the bacterial ribosomal protein bL17 family. In terms of assembly, part of the 50S ribosomal subunit. Contacts protein L32.

This Campylobacter jejuni subsp. doylei (strain ATCC BAA-1458 / RM4099 / 269.97) protein is Large ribosomal subunit protein bL17.